The primary structure comprises 505 residues: ATP synthase subunit alpha (505 aa).

170–177 is a binding site for ATP; the sequence is GDRQTGKT.

Belongs to the ATPase alpha/beta chains family. In terms of assembly, F-type ATPases have 2 components, CF(1) - the catalytic core - and CF(0) - the membrane proton channel. CF(1) has five subunits: alpha(3), beta(3), gamma(1), delta(1), epsilon(1). CF(0) has four main subunits: a(1), b(1), b'(1) and c(9-12).

The protein localises to the cellular thylakoid membrane. The catalysed reaction is ATP + H2O + 4 H(+)(in) = ADP + phosphate + 5 H(+)(out). In terms of biological role, produces ATP from ADP in the presence of a proton gradient across the membrane. The alpha chain is a regulatory subunit. In Trichodesmium erythraeum (strain IMS101), this protein is ATP synthase subunit alpha.